Here is a 535-residue protein sequence, read N- to C-terminus: Aklavinone 12-hydroxylase RdmE (535 aa).

L15, G16, E35, Q119, and L143 together coordinate FAD. Y224 acts as the Proton acceptor in catalysis. FAD is bound at residue D308. G317 provides a ligand contact to aklavinone.

Belongs to the PheA/TfdB FAD monooxygenase family. As to quaternary structure, monomer. The cofactor is FAD.

It carries out the reaction aklavinone + NADPH + O2 + H(+) = epsilon-rhodomycinone + NADP(+) + H2O. Its pathway is antibiotic biosynthesis; daunorubicin biosynthesis. It functions in the pathway antibiotic biosynthesis; carminomycin biosynthesis. It participates in antibiotic biosynthesis; rhodomycin biosynthesis. With respect to regulation, inhibited by phenylglyoxal and 2,3-butanedione. NADP provides a partial protection against inhibition by phenylglyoxal. Increasing the methanol concentration in the assay causes inhibition of the enzyme. Its function is as follows. Involved in the biosynthesis of the anthracyclines carminomycin, rhodomycin and daunorubicin (daunomycin) which are aromatic polyketide antibiotics that exhibit high cytotoxicity and are widely applied in the chemotherapy of a variety of cancers. Catalyzes the incorporation of a hydroxyl group at position C-11 of aklavinone, resulting in epsilon-rhodomycinone. It cannot accept substrates glycosylated at position C-7 and is specific for the C-9R configuration of anthracyclines. It can use both NAD or NADP but it is slowly inactivated in the presence of NADH. This chain is Aklavinone 12-hydroxylase RdmE (rdmE), found in Streptomyces purpurascens.